Here is a 181-residue protein sequence, read N- to C-terminus: Ninjurin-B (181 aa).

Over residues Met1 to Leu10 the composition is skewed to basic and acidic residues. The disordered stretch occupies residues Met1–Ser72. The Extracellular portion of the chain corresponds to Met1–Tyr115. Polar residues predominate over residues Asp12–Gly26. Basic and acidic residues predominate over residues Arg33–Phe49. The interval Asn80 to Ala91 is helix alpha1. The interval Ser94–Ala110 is helix alpha2. A helical membrane pass occupies residues Ser116–Phe136. Topologically, residues Lys137–Asp153 are cytoplasmic. A helical membrane pass occupies residues Leu154–Thr174. At Thr175–His181 the chain is on the extracellular side.

It belongs to the ninjurin family.

The protein resides in the membrane. Effector of non-apoptotic necrotic cell death that mediates plasma membrane rupture (cytolysis): oligomerizes in response to death stimuli and promotes plasma membrane rupture by introducing hydrophilic faces of 2 alpha helices into the hydrophobic membrane, leading to release intracellular molecules that propagate the inflammatory response. Also acts as a homophilic transmembrane adhesion molecule that promotes cell adhesion by mediating homophilic interactions via its extracellular region. This chain is Ninjurin-B, found in Drosophila melanogaster (Fruit fly).